Here is a 243-residue protein sequence, read N- to C-terminus: Triosephosphate isomerase (243 aa).

Position 9–11 (9–11) interacts with substrate; it reads NWK. His-96 functions as the Electrophile in the catalytic mechanism. Glu-165 functions as the Proton acceptor in the catalytic mechanism. Substrate is bound by residues Gly-171, Ser-204, and 225 to 226; that span reads GG.

It belongs to the triosephosphate isomerase family. In terms of assembly, homodimer.

It is found in the cytoplasm. It catalyses the reaction D-glyceraldehyde 3-phosphate = dihydroxyacetone phosphate. The protein operates within carbohydrate biosynthesis; gluconeogenesis. It functions in the pathway carbohydrate degradation; glycolysis; D-glyceraldehyde 3-phosphate from glycerone phosphate: step 1/1. Functionally, involved in the gluconeogenesis. Catalyzes stereospecifically the conversion of dihydroxyacetone phosphate (DHAP) to D-glyceraldehyde-3-phosphate (G3P). In Parasynechococcus marenigrum (strain WH8102), this protein is Triosephosphate isomerase.